A 337-amino-acid chain; its full sequence is Mitochondrial amidoxime-reducing component 1 (337 aa).

The N-myristoyl glycine moiety is linked to residue Gly-2. The Mitochondrial matrix segment spans residues 2–20 (GAAGSSALARFVLLAQSRP). The chain crosses the membrane as a helical; Signal-anchor for type II membrane protein span at residues 21-40 (GWLGVAALGLTAVALGAVAW). Topologically, residues 41–337 (RRAWPTRRRR…VGDPVYLLGQ (297 aa)) are cytoplasmic. Residues Lys-67, Ser-68, and Arg-92 each coordinate Mo-molybdopterin. The MOSC N-terminal region stretch occupies residues 93–183 (FWLVINQEGN…KSQPYRLVHF (91 aa)). Residues 187–335 (MRPRRPHQIA…IKVGDPVYLL (149 aa)) enclose the MOSC domain. 8 residues coordinate Mo-molybdopterin: Thr-210, Ser-211, Arg-238, Asn-240, Ser-271, Arg-272, Cys-273, and Tyr-317.

As to quaternary structure, component of a complex composed of cytochrome b5, NADH-cytochrome b5 reductase and MTARC1. It depends on Mo-molybdopterin as a cofactor.

Its subcellular location is the mitochondrion outer membrane. It localises to the membrane. The catalysed reaction is N(omega)-hydroxy-L-arginine + 2 Fe(II)-[cytochrome b5] + 2 H(+) = L-arginine + 2 Fe(III)-[cytochrome b5] + H2O. In terms of biological role, catalyzes the reduction of N-oxygenated molecules, acting as a counterpart of cytochrome P450 and flavin-containing monooxygenases in metabolic cycles. As a component of prodrug-converting system, reduces a multitude of N-hydroxylated prodrugs particularly amidoximes, leading to increased drug bioavailability. May be involved in mitochondrial N(omega)-hydroxy-L-arginine (NOHA) reduction, regulating endogenous nitric oxide levels and biosynthesis. Postulated to cleave the N-OH bond of N-hydroxylated substrates in concert with electron transfer from NADH to cytochrome b5 reductase then to cytochrome b5, the ultimate electron donor that primes the active site for substrate reduction. This Homo sapiens (Human) protein is Mitochondrial amidoxime-reducing component 1.